Consider the following 229-residue polypeptide: Peptidase E (229 aa).

Residues serine 120, aspartate 135, and histidine 157 each act as charge relay system in the active site.

This sequence belongs to the peptidase S51 family.

It localises to the cytoplasm. It catalyses the reaction Dipeptidase E catalyzes the hydrolysis of dipeptides Asp-|-Xaa. It does not act on peptides with N-terminal Glu, Asn or Gln, nor does it cleave isoaspartyl peptides.. Functionally, hydrolyzes dipeptides containing N-terminal aspartate residues. May play a role in allowing the cell to use peptide aspartate to spare carbon otherwise required for the synthesis of the aspartate family of amino acids. The chain is Peptidase E from Citrobacter koseri (strain ATCC BAA-895 / CDC 4225-83 / SGSC4696).